Reading from the N-terminus, the 586-residue chain is Aspartate--tRNA(Asp/Asn) ligase (586 aa).

L-aspartate is bound at residue Glu-172. Residues 196-199 (QLYK) are aspartate. Arg-218 is a binding site for L-aspartate. Residues 218–220 (RDE) and Gln-227 contribute to the ATP site. His-446 contributes to the L-aspartate binding site. Glu-480 is a binding site for ATP. Position 487 (Arg-487) interacts with L-aspartate. ATP is bound at residue 532 to 535 (GIDR).

Belongs to the class-II aminoacyl-tRNA synthetase family. Type 1 subfamily. In terms of assembly, homodimer.

Its subcellular location is the cytoplasm. The catalysed reaction is tRNA(Asx) + L-aspartate + ATP = L-aspartyl-tRNA(Asx) + AMP + diphosphate. Aspartyl-tRNA synthetase with relaxed tRNA specificity since it is able to aspartylate not only its cognate tRNA(Asp) but also tRNA(Asn). Reaction proceeds in two steps: L-aspartate is first activated by ATP to form Asp-AMP and then transferred to the acceptor end of tRNA(Asp/Asn). The sequence is that of Aspartate--tRNA(Asp/Asn) ligase from Borreliella burgdorferi (strain ATCC 35210 / DSM 4680 / CIP 102532 / B31) (Borrelia burgdorferi).